An 85-amino-acid polypeptide reads, in one-letter code: Antibacterial factor-related peptide 1 (85 aa).

The signal sequence occupies residues 1 to 19 (MLYFCLLLVLLLPNNGVSS).

In terms of tissue distribution, expressed in the pharynx and body wall muscle.

The protein resides in the secreted. This is Antibacterial factor-related peptide 1 from Caenorhabditis elegans.